An 874-amino-acid polypeptide reads, in one-letter code: Alanine--tRNA ligase (874 aa).

4 residues coordinate Zn(2+): histidine 564, histidine 568, cysteine 665, and histidine 669.

It belongs to the class-II aminoacyl-tRNA synthetase family. The cofactor is Zn(2+).

The protein localises to the cytoplasm. The catalysed reaction is tRNA(Ala) + L-alanine + ATP = L-alanyl-tRNA(Ala) + AMP + diphosphate. Functionally, catalyzes the attachment of alanine to tRNA(Ala) in a two-step reaction: alanine is first activated by ATP to form Ala-AMP and then transferred to the acceptor end of tRNA(Ala). Also edits incorrectly charged Ser-tRNA(Ala) and Gly-tRNA(Ala) via its editing domain. The chain is Alanine--tRNA ligase from Burkholderia pseudomallei (strain 1106a).